The following is a 224-amino-acid chain: UPF0758 protein Rpic_2712 (224 aa).

In terms of domain architecture, MPN spans 102 to 224 (TFESAQSVKD…VYGFLEHGKM (123 aa)). The Zn(2+) site is built by histidine 173, histidine 175, and aspartate 186. Residues 173–186 (HNHPTGNTEPSESD) carry the JAMM motif motif.

It belongs to the UPF0758 family.

The sequence is that of UPF0758 protein Rpic_2712 from Ralstonia pickettii (strain 12J).